The primary structure comprises 436 residues: RNA-binding motif, single-stranded-interacting protein 3 (436 aa).

Positions Ala28–Gln56 are disordered. Residues Ala30 to Pro39 show a composition bias toward pro residues. The segment covering Ser40–Ser53 has biased composition (low complexity). 2 RRM domains span residues Thr60–Gln133 and Thr139–Gly224. Polar residues predominate over residues Thr398–Thr421. Positions Thr398–Pro436 are disordered.

The protein localises to the cytoplasm. Functionally, binds poly(A) and poly(U) oligoribonucleotides. The sequence is that of RNA-binding motif, single-stranded-interacting protein 3 (RBMS3) from Pongo abelii (Sumatran orangutan).